The sequence spans 222 residues: Ribonuclease 3 (222 aa).

An N-terminal signal peptide occupies residues 1–19 (MKFFIFILALQQLYVQSFA). Gln30 serves as a coordination point for RNA. Cys36 and Cys42 are joined by a disulfide. Residues His57, Phe107, 110 to 111 (HE), and 114 to 115 (KH) each bind RNA. His57 (proton donor) is an active-site residue. Cystine bridges form between Cys72–Cys118, Cys178–Cys213, and Cys194–Cys205. Residue Glu111 is part of the active site. His115 (proton acceptor) is an active-site residue.

Belongs to the RNase T2 family.

It carries out the reaction a ribonucleotidyl-ribonucleotide-RNA + H2O = a 3'-end 3'-phospho-ribonucleotide-RNA + a 5'-end dephospho-ribonucleoside-RNA + H(+). Functionally, may remobilize phosphate, particularly when cells senesce or when phosphate becomes limiting. The protein is Ribonuclease 3 (RNS3) of Arabidopsis thaliana (Mouse-ear cress).